Consider the following 237-residue polypeptide: MQKKAELYRGKAKTVYSTENPDLLVLEFRNDTSALDGERIEQFDRKGMINNKFNHFIMTKLQEAGIPTQMEALLSDNEALVKNLDMVPVECVIRNRAAGSLVKRLGVEEGMILNPPLFDLFLKDDAKHDPMVNESYCETFGWVSQTHLARMRELTYRANEVLSKLFADAGLILVDFKLEFGLFKGEVVLGDEFSPDGARLWDKDTLNKMDKDRYRQSLGGLIEAYEEVANRLGVKLD.

The protein belongs to the SAICAR synthetase family.

The enzyme catalyses 5-amino-1-(5-phospho-D-ribosyl)imidazole-4-carboxylate + L-aspartate + ATP = (2S)-2-[5-amino-1-(5-phospho-beta-D-ribosyl)imidazole-4-carboxamido]succinate + ADP + phosphate + 2 H(+). The protein operates within purine metabolism; IMP biosynthesis via de novo pathway; 5-amino-1-(5-phospho-D-ribosyl)imidazole-4-carboxamide from 5-amino-1-(5-phospho-D-ribosyl)imidazole-4-carboxylate: step 1/2. This chain is Phosphoribosylaminoimidazole-succinocarboxamide synthase, found in Erwinia tasmaniensis (strain DSM 17950 / CFBP 7177 / CIP 109463 / NCPPB 4357 / Et1/99).